A 319-amino-acid polypeptide reads, in one-letter code: Cytochrome c biogenesis protein CcsA (319 aa).

A run of 7 helical transmembrane segments spans residues 9 to 29 (ILTH…LITL), 44 to 64 (GVIG…AYSG), 71 to 91 (LYES…FPYL), 143 to 163 (MVLG…LLVI), 225 to 245 (IISL…VWAN), 259 to 273 (TWAF…IYLH), and 286 to 306 (AIVA…VNLL).

This sequence belongs to the CcmF/CycK/Ccl1/NrfE/CcsA family. May interact with Ccs1.

The protein resides in the plastid. Its subcellular location is the chloroplast thylakoid membrane. Required during biogenesis of c-type cytochromes (cytochrome c6 and cytochrome f) at the step of heme attachment. This is Cytochrome c biogenesis protein CcsA from Oenothera parviflora (Small-flowered evening primrose).